The following is a 214-amino-acid chain: ATP phosphoribosyltransferase (214 aa).

The protein belongs to the ATP phosphoribosyltransferase family. Short subfamily. As to quaternary structure, heteromultimer composed of HisG and HisZ subunits.

The protein localises to the cytoplasm. The catalysed reaction is 1-(5-phospho-beta-D-ribosyl)-ATP + diphosphate = 5-phospho-alpha-D-ribose 1-diphosphate + ATP. The protein operates within amino-acid biosynthesis; L-histidine biosynthesis; L-histidine from 5-phospho-alpha-D-ribose 1-diphosphate: step 1/9. Functionally, catalyzes the condensation of ATP and 5-phosphoribose 1-diphosphate to form N'-(5'-phosphoribosyl)-ATP (PR-ATP). Has a crucial role in the pathway because the rate of histidine biosynthesis seems to be controlled primarily by regulation of HisG enzymatic activity. The polypeptide is ATP phosphoribosyltransferase (Ruminiclostridium cellulolyticum (strain ATCC 35319 / DSM 5812 / JCM 6584 / H10) (Clostridium cellulolyticum)).